The following is a 417-amino-acid chain: uncharacterized protein (417 aa).

This sequence to M.tuberculosis Rv2067c.

This is an uncharacterized protein from Synechococcus sp. (strain ATCC 27144 / PCC 6301 / SAUG 1402/1) (Anacystis nidulans).